We begin with the raw amino-acid sequence, 326 residues long: Fructose operon regulatory protein (326 aa).

Residues 1–58 (MTLDEIAKLAGVSKTTASYVINGKAQKYRISEKTQHKVMAVVEQYNFRPDHAASALRA) form the HTH lacI-type domain. A DNA-binding region (H-T-H motif) is located at residues 3 to 22 (LDEIAKLAGVSKTTASYVIN).

As to quaternary structure, homodimer.

Its activity is regulated as follows. Interaction with F1P may induce a structural change in the DNA spacer region between the -35 and -10 elements, thereby facilitating RNAP binding to the promoter to trigger the transcriptional activation of the fru operon. Interaction with F1P does not release FruR from its binding sequence. Its function is as follows. Regulates the expression of the fruBKA (fru) operon, which encodes proteins involved in the import and metabolism of fructose. In the absence of fructose 1-phosphate (F1P), binds to the promoter region of fruB, interferes with the binding of the RNA polymerase (RNAP) to the promoter and represses the expression of the operon. In the presence of F1P, activates the transcription of the fru operon by facilitating the binding of RNAP to the promoter. Essential for the expression of the fru operon and thus for growth on fructose. The polypeptide is Fructose operon regulatory protein (Vibrio cholerae serotype O1 (strain ATCC 39315 / El Tor Inaba N16961)).